A 140-amino-acid polypeptide reads, in one-letter code: Putative pre-16S rRNA nuclease (140 aa).

It belongs to the YqgF nuclease family.

Its subcellular location is the cytoplasm. Could be a nuclease involved in processing of the 5'-end of pre-16S rRNA. This chain is Putative pre-16S rRNA nuclease, found in Mannheimia succiniciproducens (strain KCTC 0769BP / MBEL55E).